The primary structure comprises 321 residues: Genome polyprotein (321 aa).

At 1–52 the chain is on the cytoplasmic side; sequence RNLGKVIDTLTCGFADLMGYIPLVGAPLGGAARALAHGVRVLEDGVNYATGN. The segment at 6–57 is interaction with APOA2; sequence VIDTLTCGFADLMGYIPLVGAPLGGAARALAHGVRVLEDGVNYATGNLPGCS. Residues 48 to 51 form an important for lipid droplets localization region; the sequence is YATG. The helical transmembrane segment at 53–73 threads the bilayer; it reads LPGCSFSIFLLALLSCLTVPA. The propeptide at 62–75 is ER anchor for the core protein, removed in mature form by host signal peptidase; the sequence is LLALLSCLTVPASA. At 74-242 the chain is on the lumenal side; sequence SAHQVRNSTG…AGAHWGVLAG (169 aa). N-linked (GlcNAc...) asparagine; by host glycans are attached at residues asparagine 80, asparagine 93, and asparagine 118. Residues 149–180 are important for fusion; that stretch reads LVGSATLCSALYVGDLCGSVFLVGQLFTFSPR. N-linked (GlcNAc...) asparagine; by host glycosylation is present at asparagine 189. A helical transmembrane segment spans residues 243 to 263; it reads IAYFSMVGNWAKVLVVLLLFA. The Lumenal portion of the chain corresponds to 264–321; that stretch reads GVDAETYTSGGNAGHTMTGIVRFFAPGPKQNVHLINTNGSWHINSTALNCNDSLNTGW. Residues 268-294 form an HVR1 region; it reads ETYTSGGNAGHTMTGIVRFFAPGPKQN. N-linked (GlcNAc...) (high mannose) asparagine; by host glycosylation is found at asparagine 301, asparagine 307, and asparagine 314.

Belongs to the hepacivirus polyprotein family. As to quaternary structure, homooligomer. Interacts with E1 (via C-terminus). Interacts with the non-structural protein 5A. Interacts (via N-terminus) with host STAT1 (via SH2 domain); this interaction results in decreased STAT1 phosphorylation and ubiquitin-mediated proteasome-dependent STAT1 degradation, leading to decreased IFN-stimulated gene transcription. Interacts with host STAT3; this interaction constitutively activates STAT3. Interacts with host LTBR receptor. Interacts with host TNFRSF1A receptor and possibly induces apoptosis. Interacts with host HNRPK. Interacts with host YWHAE. Interacts with host UBE3A/E6AP. Interacts with host DDX3X. Interacts with host APOA2. Interacts with host RXRA protein. Interacts with host SP110 isoform 3/Sp110b; this interaction sequesters the transcriptional corepressor SP110 away from the nucleus. Interacts with host CREB3 nuclear transcription protein; this interaction triggers cell transformation. Interacts with host ACY3. Interacts with host C1QR1. Interacts with host RBM24; this interaction, which enhances the interaction of the mature core protein with 5'-UTR, may inhibit viral translation and favor replication. Interacts with host EIF2AK2/PKR; this interaction induces the autophosphorylation of EIF2AK2. Part of the viral assembly initiation complex composed of NS2, E1, E2, NS3, NS4A, NS5A and the mature core protein. Forms a heterodimer with envelope glycoprotein E2. Interacts with mature core protein. Interacts with protease NS2. The heterodimer E1/E2 interacts with host CLDN1; this interaction plays a role in viral entry into host cell. Interacts with host SPSB2 (via C-terminus). Part of the viral assembly initiation complex composed of NS2, E1, E2, NS3, NS4A, NS5A and the mature core protein. In terms of assembly, forms a heterodimer with envelope glycoprotein E1. Interacts with host CD81 and SCARB1 receptors; these interactions play a role in viral entry into host cell. Interacts with host EIF2AK2/PKR; this interaction inhibits EIF2AK2 and probably allows the virus to evade the innate immune response. Interacts with host CD209/DC-SIGN and CLEC4M/DC-SIGNR. Interact with host SPCS1; this interaction is essential for viral particle assembly. Interacts with protease NS2. The heterodimer E1/E2 interacts with host CLDN1; this interaction plays a role in viral entry into host cell. Part of the viral assembly initiation complex composed of NS2, E1, E2, NS3, NS4A, NS5A and the mature core protein. In terms of processing, specific enzymatic cleavages in vivo yield mature proteins. The structural proteins, core, E1, E2 and p7 are produced by proteolytic processing by host signal peptidases. The core protein precursor is synthesized as a 23 kDa, which is retained in the ER membrane through the hydrophobic signal peptide. Cleavage by the signal peptidase releases the 21 kDa mature core protein. The cleavage of the core protein precursor occurs between aminoacids 176 and 188 but the exact cleavage site is not known. Some degraded forms of the core protein appear as well during the course of infection. The other proteins (p7, NS2, NS3, NS4A, NS4B, NS5A and NS5B) are cleaved by the viral proteases. Autoprocessing between NS2 and NS3 is mediated by the NS2 cysteine protease catalytic domain and regulated by the NS3 N-terminal domain. Phosphorylated by host PKC and PKA. Post-translationally, ubiquitinated; mediated by UBE3A and leading to core protein subsequent proteasomal degradation. In terms of processing, highly N-glycosylated.

Its subcellular location is the host endoplasmic reticulum membrane. The protein resides in the host mitochondrion membrane. The protein localises to the virion. It localises to the host cytoplasm. It is found in the host nucleus. Its subcellular location is the host lipid droplet. The protein resides in the virion membrane. Functionally, packages viral RNA to form a viral nucleocapsid, and promotes virion budding. Participates in the viral particle production as a result of its interaction with the non-structural protein 5A. Binds RNA and may function as a RNA chaperone to induce the RNA structural rearrangements taking place during virus replication. Modulates viral translation initiation by interacting with viral IRES and 40S ribosomal subunit. Affects various cell signaling pathways, host immunity and lipid metabolism. Prevents the establishment of cellular antiviral state by blocking the interferon-alpha/beta (IFN-alpha/beta) and IFN-gamma signaling pathways and by blocking the formation of phosphorylated STAT1 and promoting ubiquitin-mediated proteasome-dependent degradation of STAT1. Activates STAT3 leading to cellular transformation. Regulates the activity of cellular genes, including c-myc and c-fos. May repress the promoter of p53, and sequester CREB3 and SP110 isoform 3/Sp110b in the cytoplasm. Represses cell cycle negative regulating factor CDKN1A, thereby interrupting an important check point of normal cell cycle regulation. Targets transcription factors involved in the regulation of inflammatory responses and in the immune response: suppresses TNF-induced NF-kappa-B activation, and activates AP-1. Binds to dendritic cells (DCs) via C1QR1, resulting in down-regulation of T-lymphocytes proliferation. Alters lipid metabolism by interacting with hepatocellular proteins involved in lipid accumulation and storage. Induces up-regulation of FAS promoter activity, and thereby contributes to the increased triglyceride accumulation in hepatocytes (steatosis). Forms a heterodimer with envelope glycoprotein E2, which mediates virus attachment to the host cell, virion internalization through clathrin-dependent endocytosis and fusion with host membrane. Fusion with the host cell is most likely mediated by both E1 and E2, through conformational rearrangements of the heterodimer required for fusion rather than a classical class II fusion mechanism. E1/E2 heterodimer binds host apolipoproteins such as APOB and ApoE thereby forming a lipo-viro-particle (LVP). APOE associated to the LVP allows the initial virus attachment to cell surface receptors such as the heparan sulfate proteoglycans (HSPGs), syndecan-1 (SDC1), syndecan-1 (SDC2), the low-density lipoprotein receptor (LDLR) and scavenger receptor class B type I (SCARB1). The cholesterol transfer activity of SCARB1 allows E2 exposure and binding of E2 to SCARB1 and the tetraspanin CD81. E1/E2 heterodimer binding on CD81 activates the epithelial growth factor receptor (EGFR) signaling pathway. Diffusion of the complex E1-E2-EGFR-SCARB1-CD81 to the cell lateral membrane allows further interaction with Claudin 1 (CLDN1) and occludin (OCLN) to finally trigger HCV entry. In terms of biological role, forms a heterodimer with envelope glycoprotein E1, which mediates virus attachment to the host cell, virion internalization through clathrin-dependent endocytosis and fusion with host membrane. Fusion with the host cell is most likely mediated by both E1 and E2, through conformational rearrangements of the heterodimer required for fusion rather than a classical class II fusion mechanism. The interaction between envelope glycoprotein E2 and host apolipoprotein E/APOE allows the proper assembly, maturation and infectivity of the viral particles. This interaction is probably promoted via the up-regulation of cellular autophagy by the virus. E1/E2 heterodimer binds host apolipoproteins such as APOB and APOE thereby forming a lipo-viro-particle (LVP). APOE associated to the LVP allows the initial virus attachment to cell surface receptors such as the heparan sulfate proteoglycans (HSPGs), syndecan-1 (SDC1), syndecan-1 (SDC2), the low-density lipoprotein receptor (LDLR) and scavenger receptor class B type I (SCARB1). The cholesterol transfer activity of SCARB1 allows E2 exposure and binding of E2 to SCARB1 and the tetraspanin CD81. E1/E2 heterodimer binding on CD81 activates the epithelial growth factor receptor (EGFR) signaling pathway. Diffusion of the complex E1-E2-EGFR-SCARB1-CD81 to the cell lateral membrane allows further interaction with Claudin 1 (CLDN1) and occludin (OCLN) to finally trigger HCV entry. Inhibits host EIF2AK2/PKR activation, preventing the establishment of an antiviral state. Viral ligand for CD209/DC-SIGN and CLEC4M/DC-SIGNR, which are respectively found on dendritic cells (DCs), and on liver sinusoidal endothelial cells and macrophage-like cells of lymph node sinuses. These interactions allow the capture of circulating HCV particles by these cells and subsequent facilitated transmission to permissive cells such as hepatocytes and lymphocyte subpopulations. The chain is Genome polyprotein from Hepatitis C virus (isolate HCT18) (HCV).